A 406-amino-acid chain; its full sequence is Phosphopentomutase (406 aa).

Mn(2+)-binding residues include Asp10, Asp305, His310, Asp346, His347, and His358.

This sequence belongs to the phosphopentomutase family. Requires Mn(2+) as cofactor.

It localises to the cytoplasm. It carries out the reaction 2-deoxy-alpha-D-ribose 1-phosphate = 2-deoxy-D-ribose 5-phosphate. The enzyme catalyses alpha-D-ribose 1-phosphate = D-ribose 5-phosphate. It participates in carbohydrate degradation; 2-deoxy-D-ribose 1-phosphate degradation; D-glyceraldehyde 3-phosphate and acetaldehyde from 2-deoxy-alpha-D-ribose 1-phosphate: step 1/2. Its function is as follows. Isomerase that catalyzes the conversion of deoxy-ribose 1-phosphate (dRib-1-P) and ribose 1-phosphate (Rib-1-P) to deoxy-ribose 5-phosphate (dRib-5-P) and ribose 5-phosphate (Rib-5-P), respectively. The chain is Phosphopentomutase from Vibrio campbellii (strain ATCC BAA-1116).